Reading from the N-terminus, the 22-residue chain is Phospholipase A2 (22 aa).

Belongs to the phospholipase A2 family. The cofactor is Ca(2+).

Its subcellular location is the secreted. It catalyses the reaction a 1,2-diacyl-sn-glycero-3-phosphocholine + H2O = a 1-acyl-sn-glycero-3-phosphocholine + a fatty acid + H(+). In terms of biological role, PA2 catalyzes the calcium-dependent hydrolysis of the 2-acyl groups in 3-sn-phosphoglycerides. In Struthio camelus (Common ostrich), this protein is Phospholipase A2.